We begin with the raw amino-acid sequence, 197 residues long: Peptidyl-tRNA hydrolase (197 aa).

Tyr-23 contributes to the tRNA binding site. The active-site Proton acceptor is the His-28. TRNA contacts are provided by Phe-73, Asn-75, and Asn-121.

This sequence belongs to the PTH family. Monomer.

The protein resides in the cytoplasm. It carries out the reaction an N-acyl-L-alpha-aminoacyl-tRNA + H2O = an N-acyl-L-amino acid + a tRNA + H(+). Hydrolyzes ribosome-free peptidyl-tRNAs (with 1 or more amino acids incorporated), which drop off the ribosome during protein synthesis, or as a result of ribosome stalling. Functionally, catalyzes the release of premature peptidyl moieties from peptidyl-tRNA molecules trapped in stalled 50S ribosomal subunits, and thus maintains levels of free tRNAs and 50S ribosomes. The polypeptide is Peptidyl-tRNA hydrolase (Frankia casuarinae (strain DSM 45818 / CECT 9043 / HFP020203 / CcI3)).